The primary structure comprises 204 residues: Chaperone protein TorD (204 aa).

This sequence belongs to the TorD/DmsD family. TorD subfamily.

The protein localises to the cytoplasm. Involved in the biogenesis of TorA. Acts on TorA before the insertion of the molybdenum cofactor and, as a result, probably favors a conformation of the apoenzyme that is competent for acquiring the cofactor. This chain is Chaperone protein TorD, found in Shewanella baltica (strain OS223).